Consider the following 313-residue polypeptide: Fe-S cluster assembly protein dre2 (313 aa).

Disordered regions lie at residues 1-25 and 151-187; these read MSIT…SQKR and GRKK…AQNN. The tract at residues 20–145 is N-terminal SAM-like domain; the sequence is NGSQKRNLLL…FEKPVQEAAV (126 aa). Positions 146 to 203 are linker; sequence PLKLGGRKKKDKTNGVNGVQNGVATNGASTNGVGMFDPAQNNDDELIDEDALLSDDDL. A compositionally biased stretch (polar residues) spans 159-177; that stretch reads NGVNGVQNGVATNGASTNG. [2Fe-2S] cluster-binding residues include cysteine 213, cysteine 225, cysteine 228, and cysteine 230. The segment at 213-230 is fe-S binding site A; it reads CVPETAKKRRRPCKDCTC. Positions 276, 279, 287, and 290 each coordinate [4Fe-4S] cluster. 2 short sequence motifs (cx2C motif) span residues 276-279 and 287-290; these read CNSC and CSSC. A fe-S binding site B region spans residues 276–290; that stretch reads CNSCSLGDAFRCSSC.

The protein belongs to the anamorsin family. Monomer. Interacts with tah18. Interacts with mia40. [2Fe-2S] cluster serves as cofactor. [4Fe-4S] cluster is required as a cofactor.

It is found in the cytoplasm. The protein resides in the mitochondrion intermembrane space. Functionally, component of the cytosolic iron-sulfur (Fe-S) protein assembly (CIA) machinery required for the maturation of extramitochondrial Fe-S proteins. Part of an electron transfer chain functioning in an early step of cytosolic Fe-S biogenesis, facilitating the de novo assembly of a [4Fe-4S] cluster on the scaffold complex cfd1-nbp35. Electrons are transferred to dre2 from NADPH via the FAD- and FMN-containing protein tah18. Tah18-dre2 are also required for the assembly of the diferric tyrosyl radical cofactor of ribonucleotide reductase (RNR), probably by providing electrons for reduction during radical cofactor maturation in the catalytic small subunit rnr2. The protein is Fe-S cluster assembly protein dre2 of Aspergillus flavus (strain ATCC 200026 / FGSC A1120 / IAM 13836 / NRRL 3357 / JCM 12722 / SRRC 167).